The following is a 167-amino-acid chain: Probable D-lyxose ketol-isomerase (167 aa).

Mn(2+) is bound by residues histidine 69, histidine 71, glutamate 82, and histidine 137.

It belongs to the D-lyxose ketol-isomerase family. In terms of assembly, homodimer. Mn(2+) is required as a cofactor.

The enzyme catalyses D-lyxose = D-xylulose. In terms of biological role, sugar isomerase that catalyzes the reversible isomerization of D-lyxose to D-xylulose. The protein is Probable D-lyxose ketol-isomerase (ydaE) of Bacillus subtilis (strain 168).